The primary structure comprises 86 residues: Toxin CSTX-20 (86 aa).

In terms of tissue distribution, expressed by the venom gland.

It is found in the secreted. The chain is Toxin CSTX-20 from Cupiennius salei (American wandering spider).